A 327-amino-acid polypeptide reads, in one-letter code: Sugar transporter ERD6-like 9 (327 aa).

Helical transmembrane passes span phenylalanine 26–glycine 46, valine 68–alanine 88, valine 102–leucine 122, phenylalanine 125–isoleucine 145, glycine 152–leucine 172, isoleucine 180–proline 200, leucine 260–tyrosine 280, and isoleucine 295–valine 315.

The protein belongs to the major facilitator superfamily. Sugar transporter (TC 2.A.1.1) family.

The protein resides in the membrane. Functionally, sugar transporter. The protein is Sugar transporter ERD6-like 9 of Arabidopsis thaliana (Mouse-ear cress).